The following is a 367-amino-acid chain: tRNA pseudouridine synthase D (367 aa).

The active-site Nucleophile is the Asp80. One can recognise a TRUD domain in the interval 156 to 316 (GIPNWFGEQR…LKQERRALRL (161 aa)).

It belongs to the pseudouridine synthase TruD family.

It carries out the reaction uridine(13) in tRNA = pseudouridine(13) in tRNA. Functionally, responsible for synthesis of pseudouridine from uracil-13 in transfer RNAs. This chain is tRNA pseudouridine synthase D, found in Xanthomonas campestris pv. campestris (strain B100).